Consider the following 215-residue polypeptide: Mediator of RNA polymerase II transcription subunit 8 (215 aa).

Residues 27–89 are a coiled coil; that stretch reads LDALRMKFSQ…YEETLDATVA (63 aa).

This sequence belongs to the Mediator complex subunit 8 family. As to quaternary structure, component of the Mediator complex.

It is found in the nucleus. Functionally, component of the Mediator complex, a coactivator involved in the regulated transcription of nearly all RNA polymerase II-dependent genes. Mediator functions as a bridge to convey information from gene-specific regulatory proteins to the basal RNA polymerase II transcription machinery. Mediator is recruited to promoters by direct interactions with regulatory proteins and serves as a scaffold for the assembly of a functional preinitiation complex with RNA polymerase II and the general transcription factors. This is Mediator of RNA polymerase II transcription subunit 8 (MED8) from Kluyveromyces lactis (strain ATCC 8585 / CBS 2359 / DSM 70799 / NBRC 1267 / NRRL Y-1140 / WM37) (Yeast).